Consider the following 280-residue polypeptide: MQQPLNYPYPQIYWVDSRASSPWGPPGSVLPCPSSVPGRPGQRRPPPPPPPTLPPPPPPPPLPPLPLPPLKTRRDHNTGLCLLVMFFMVLVALVGLGLGMFQLFHLQKELAELRESTSQKHVASSLEKQIGQLNPPSEKRELRKVAHLTGKPNSRSIPLEWEDTYGIALVSGVKYKKGGLVINDTGMYFVYSKVNFRGQSCNNQPLNHKVYMRNSKYPQDLVLMEGKMMNYCTTGQMWARSSYLGAVFNLTSADHLYVNVSELSLVSFEESKTFFGLYKL.

The Cytoplasmic portion of the chain corresponds to 1-80 (MQQPLNYPYP…KTRRDHNTGL (80 aa)). The segment at 20-71 (SSPWGPPGSVLPCPSSVPGRPGQRRPPPPPPPTLPPPPPPPPLPPLPLPPLK) is disordered. Over residues 43–69 (RRPPPPPPPTLPPPPPPPPLPPLPLPP) the composition is skewed to pro residues. The chain crosses the membrane as a helical; Signal-anchor for type II membrane protein span at residues 81-101 (CLLVMFFMVLVALVGLGLGMF). The Extracellular portion of the chain corresponds to 102–280 (QLFHLQKELA…SKTFFGLYKL (179 aa)). The THD domain occupies 144–280 (KVAHLTGKPN…SKTFFGLYKL (137 aa)). The N-linked (GlcNAc...) asparagine glycan is linked to asparagine 183. Cysteine 201 and cysteine 232 are oxidised to a cystine. N-linked (GlcNAc...) asparagine glycans are attached at residues asparagine 249 and asparagine 259.

Belongs to the tumor necrosis factor family. Homotrimer. Interacts with ARHGAP9, BAIAP2L1, BTK, CACNB3, CACNB4, CRK, DLG2, DNMBP, DOCK4, EPS8L3, FGR, FYB1, FYN, HCK, ITK, ITSN2, KALRN, LYN, MACC1, MIA, MPP4, MYO15A, NCF1, NCK1, NCK2, NCKIPSD, OSTF1, PIK3R1, PSTPIP1, RIMBP3C, SAMSN1, SH3GL3, SH3PXD2B, SH3PXD2A, SH3RF2, SKAP2, SNX33, SNX9, SORBS3, SPTA1, SRC, SRGAP1, SRGAP2, SRGAP3, TEC, TJP3 and YES1. In terms of processing, the soluble form derives from the membrane form by proteolytic processing. The membrane-bound form undergoes two successive intramembrane proteolytic cleavages. The first one is processed by ADAM10 producing an N-terminal fragment, which lacks the receptor-binding extracellular domain. This ADAM10-processed FasL (FasL APL) remnant form is still membrane anchored and further processed by SPPL2A that liberates the FasL intracellular domain (FasL ICD). FasL shedding by ADAM10 is a prerequisite for subsequent intramembrane cleavage by SPPL2A in T-cells. Phosphorylated by FGR on tyrosine residues; this is required for ubiquitination and subsequent internalization. Post-translationally, N-glycosylated. Glycosylation enhances apoptotic activity. In terms of processing, monoubiquitinated.

It is found in the cell membrane. Its subcellular location is the cytoplasmic vesicle lumen. The protein localises to the lysosome lumen. The protein resides in the secreted. It localises to the nucleus. Cytokine that binds to TNFRSF6/FAS, a receptor that transduces the apoptotic signal into cells. Involved in cytotoxic T-cell-mediated apoptosis, natural killer cell-mediated apoptosis and in T-cell development. Initiates fratricidal/suicidal activation-induced cell death (AICD) in antigen-activated T-cells contributing to the termination of immune responses. TNFRSF6/FAS-mediated apoptosis has also a role in the induction of peripheral tolerance. Binds to TNFRSF6B/DcR3, a decoy receptor that blocks apoptosis. In terms of biological role, induces FAS-mediated activation of NF-kappa-B, initiating non-apoptotic signaling pathways. Can induce apoptosis but does not appear to be essential for this process. Functionally, cytoplasmic form induces gene transcription inhibition. The chain is Tumor necrosis factor ligand superfamily member 6 (FASLG) from Felis catus (Cat).